Consider the following 109-residue polypeptide: uncharacterized protein (109 aa).

The interval 1 to 26 (MTPRSLPRYGNSSRRKSFPMHRPSNV) is disordered.

This is an uncharacterized protein from Mycobacterium bovis (strain ATCC BAA-935 / AF2122/97).